A 382-amino-acid polypeptide reads, in one-letter code: Gap junction alpha-1 protein (382 aa).

Topologically, residues 2–23 are cytoplasmic; sequence GGWSALAKLLGKVQAYSPAGGK. Ser5 is modified (phosphoserine). The helical transmembrane segment at 24–44 threads the bilayer; sequence VWLSVLFIFRILLLGTAVESA. The Extracellular segment spans residues 45-76; sequence WGDEQSAFRCNTQQPGCENVCYDKSFPISHVR. 2 cysteine pairs are disulfide-bonded: Cys54–Cys192 and Cys187–Cys198. A helical transmembrane segment spans residues 77–97; the sequence is FWVLQIIFVSVPTLLYLAHVF. Topologically, residues 98 to 155 are cytoplasmic; sequence YVMRKEEKLNKKEEELKVAQTDGANVDMHLKQIEIKKFKYGIEEHGKVKMRGGLLRTY. A Glycyl lysine isopeptide (Lys-Gly) (interchain with G-Cter in SUMO) cross-link involves residue Lys144. Residues 156–176 form a helical membrane-spanning segment; sequence IISILFKSVFEVAFLLIQWYI. Residues 177–207 are Extracellular-facing; it reads YGFSLSAVYTCKREPCPHQVDCFLSRPTEKT. A helical membrane pass occupies residues 208–228; that stretch reads IFIIFMLVVSLVSLALNIIEL. The Cytoplasmic portion of the chain corresponds to 229 to 382; it reads FYVFFKGVKD…SRPRPDDLEI (154 aa). A Glycyl lysine isopeptide (Lys-Gly) (interchain with G-Cter in SUMO) cross-link involves residue Lys237. Positions 244-382 are interaction with NOV; that stretch reads SDPYHATTGP…SRPRPDDLEI (139 aa). Position 247 is a phosphotyrosine (Tyr247). Residues Ser255, Ser257, and Ser262 each carry the phosphoserine modification. The tract at residues 264 to 382 is interaction with UBQLN4; that stretch reads EYAYFNGCSS…SRPRPDDLEI (119 aa). Cys271 bears the S-nitrosocysteine mark. Position 275 is a phosphothreonine (Thr275). 2 positions are modified to phosphoserine: Ser306 and Ser314. Polar residues predominate over residues 317–332; that stretch reads QNRMGQAGSTISNSHA. Residues 317–382 are disordered; that stretch reads QNRMGQAGST…SRPRPDDLEI (66 aa). Residue Ser325 is modified to Phosphoserine; by CK1. At Thr326 the chain carries Phosphothreonine. 2 positions are modified to phosphoserine; by CK1: Ser328 and Ser330. Residues Ser344 and Ser365 each carry the phosphoserine modification. A compositionally biased stretch (low complexity) spans 362-374; sequence RPSSRASSRASSR. Ser368 is subject to Phosphoserine; by PKC/PRKCG and PKC/PRKCD. Ser369 and Ser373 each carry phosphoserine.

Belongs to the connexin family. Alpha-type (group II) subfamily. A connexon is composed of a hexamer of connexins. Interacts with SGSM3. Interacts with RIC1/CIP150. Interacts with CNST and CSNK1D. Interacts (via C-terminus) with TJP1. Interacts (via C-terminus) with SRC (via SH3 domain). Interacts (not ubiquitinated) with UBQLN4 (via UBA domain). Interacts with NOV. Interacts with TMEM65. Interacts with ANK3/ANKG and PKP2. Phosphorylation at Ser-325, Ser-328 and Ser-330 by CK1 modulates gap junction assembly. Phosphorylated at Ser-368 by PRKCG; phosphorylation induces disassembly of gap junction plaques and inhibition of gap junction activity. Phosphorylation at Ser-368 by PRKCD triggers its internalization into small vesicles leading to proteasome-mediated degradation. In terms of processing, sumoylated with SUMO1, SUMO2 and SUMO3, which may regulate the level of functional Cx43 gap junctions at the plasma membrane. May be desumoylated by SENP1 or SENP2. Post-translationally, S-nitrosylation at Cys-271 is enriched at the muscle endothelial gap junction in arteries, it augments channel permeability and may regulate of smooth muscle cell to endothelial cell communication. Acetylated in the developing cortex; leading to delocalization from the cell membrane.

It is found in the cell membrane. The protein resides in the cell junction. Its subcellular location is the gap junction. It localises to the endoplasmic reticulum. Gap junction protein that acts as a regulator of bladder capacity. A gap junction consists of a cluster of closely packed pairs of transmembrane channels, the connexons, through which materials of low MW diffuse from one cell to a neighboring cell. May play a critical role in the physiology of hearing by participating in the recycling of potassium to the cochlear endolymph. Negative regulator of bladder functional capacity: acts by enhancing intercellular electrical and chemical transmission, thus sensitizing bladder muscles to cholinergic neural stimuli and causing them to contract. May play a role in cell growth inhibition through the regulation of NOV expression and localization. Plays an essential role in gap junction communication in the ventricles. The protein is Gap junction alpha-1 protein (GJA1) of Canis lupus familiaris (Dog).